Reading from the N-terminus, the 270-residue chain is 4-hydroxy-tetrahydrodipicolinate reductase (270 aa).

NAD(+)-binding positions include 11 to 16 (GASGRM) and E37. R38 contributes to the NADP(+) binding site. NAD(+) is bound by residues 101-103 (GTT) and 125-128 (APNM). The Proton donor/acceptor role is filled by H158. (S)-2,3,4,5-tetrahydrodipicolinate is bound at residue H159. K162 (proton donor) is an active-site residue. (S)-2,3,4,5-tetrahydrodipicolinate is bound at residue 168–169 (GT).

The protein belongs to the DapB family.

It is found in the cytoplasm. The enzyme catalyses (S)-2,3,4,5-tetrahydrodipicolinate + NAD(+) + H2O = (2S,4S)-4-hydroxy-2,3,4,5-tetrahydrodipicolinate + NADH + H(+). The catalysed reaction is (S)-2,3,4,5-tetrahydrodipicolinate + NADP(+) + H2O = (2S,4S)-4-hydroxy-2,3,4,5-tetrahydrodipicolinate + NADPH + H(+). It participates in amino-acid biosynthesis; L-lysine biosynthesis via DAP pathway; (S)-tetrahydrodipicolinate from L-aspartate: step 4/4. Functionally, catalyzes the conversion of 4-hydroxy-tetrahydrodipicolinate (HTPA) to tetrahydrodipicolinate. The polypeptide is 4-hydroxy-tetrahydrodipicolinate reductase (Shewanella amazonensis (strain ATCC BAA-1098 / SB2B)).